The sequence spans 181 residues: Acireductone dioxygenase 2 (181 aa).

Residues His-97, His-99, Glu-103, and His-141 each coordinate Fe(2+). Ni(2+) is bound by residues His-97, His-99, Glu-103, and His-141.

This sequence belongs to the acireductone dioxygenase (ARD) family. In terms of assembly, monomer. It depends on Fe(2+) as a cofactor. Ni(2+) serves as cofactor.

The enzyme catalyses 1,2-dihydroxy-5-(methylsulfanyl)pent-1-en-3-one + O2 = 3-(methylsulfanyl)propanoate + CO + formate + 2 H(+). It catalyses the reaction 1,2-dihydroxy-5-(methylsulfanyl)pent-1-en-3-one + O2 = 4-methylsulfanyl-2-oxobutanoate + formate + 2 H(+). It functions in the pathway amino-acid biosynthesis; L-methionine biosynthesis via salvage pathway; L-methionine from S-methyl-5-thio-alpha-D-ribose 1-phosphate: step 5/6. Functionally, catalyzes 2 different reactions between oxygen and the acireductone 1,2-dihydroxy-3-keto-5-methylthiopentene (DHK-MTPene) depending upon the metal bound in the active site. Fe-containing acireductone dioxygenase (Fe-ARD) produces formate and 2-keto-4-methylthiobutyrate (KMTB), the alpha-ketoacid precursor of methionine in the methionine recycle pathway. Ni-containing acireductone dioxygenase (Ni-ARD) produces methylthiopropionate, carbon monoxide and formate, and does not lie on the methionine recycle pathway. The protein is Acireductone dioxygenase 2 of Pectobacterium atrosepticum (strain SCRI 1043 / ATCC BAA-672) (Erwinia carotovora subsp. atroseptica).